We begin with the raw amino-acid sequence, 52 residues long: Small ribosomal subunit protein uS14 (52 aa).

Zn(2+)-binding residues include Cys17, Cys20, Cys35, and Cys38.

The protein belongs to the universal ribosomal protein uS14 family. Zinc-binding uS14 subfamily. As to quaternary structure, part of the 30S ribosomal subunit. Zn(2+) is required as a cofactor.

Binds 16S rRNA, required for the assembly of 30S particles. The sequence is that of Small ribosomal subunit protein uS14 from Halobacterium salinarum (strain ATCC 700922 / JCM 11081 / NRC-1) (Halobacterium halobium).